Here is a 250-residue protein sequence, read N- to C-terminus: Exosome complex component Rrp41 (250 aa).

Belongs to the RNase PH family. Rrp41 subfamily. In terms of assembly, component of the archaeal exosome complex. Forms a hexameric ring-like arrangement composed of 3 Rrp41-Rrp42 heterodimers. The hexameric ring associates with a trimer of Rrp4 and/or Csl4 subunits.

It is found in the cytoplasm. Its function is as follows. Catalytic component of the exosome, which is a complex involved in RNA degradation. Has 3'-&gt;5' exoribonuclease activity. Can also synthesize heteromeric RNA-tails. This Pyrococcus furiosus (strain ATCC 43587 / DSM 3638 / JCM 8422 / Vc1) protein is Exosome complex component Rrp41.